The sequence spans 205 residues: Small ribosomal subunit protein uS4 (205 aa).

Residues 1–12 (MSKRVQAKHKLD) are compositionally biased toward basic residues. The interval 1–49 (MSKRVQAKHKLDRRMGQNIWGRPKSPVNRREYGPGQHGQRRKGKMSDFG) is disordered. An S4 RNA-binding domain is found at 94–155 (RRLDAVVYRS…ASRQLEIVVV (62 aa)).

This sequence belongs to the universal ribosomal protein uS4 family. In terms of assembly, part of the 30S ribosomal subunit. Contacts protein S5. The interaction surface between S4 and S5 is involved in control of translational fidelity.

Functionally, one of the primary rRNA binding proteins, it binds directly to 16S rRNA where it nucleates assembly of the body of the 30S subunit. Its function is as follows. With S5 and S12 plays an important role in translational accuracy. The chain is Small ribosomal subunit protein uS4 from Methylorubrum populi (strain ATCC BAA-705 / NCIMB 13946 / BJ001) (Methylobacterium populi).